Reading from the N-terminus, the 155-residue chain is Phospholipase A2 A2-actitoxin-Ucs2a (155 aa).

An N-terminal signal peptide occupies residues 1-19 (MKNNIILVILLGISVFVDC). A propeptide spanning residues 20–42 (LPLNDQEEDKSLNAQESEVSAVQ) is cleaved from the precursor. 6 disulfide bridges follow: Cys55-Cys118, Cys71-Cys87, Cys86-Cys143, Cys93-Cys136, Cys100-Cys129, and Cys122-Cys134. Gly72 and Gly74 together coordinate Ca(2+). His90 is a catalytic residue. A Ca(2+)-binding site is contributed by Asp91. Asp137 is a catalytic residue.

It belongs to the phospholipase A2 family. The cofactor is Ca(2+).

The protein resides in the secreted. The protein localises to the nematocyst. The catalysed reaction is a 1,2-diacyl-sn-glycero-3-phosphocholine + H2O = a 1-acyl-sn-glycero-3-phosphocholine + a fatty acid + H(+). PLA2 catalyzes the calcium-dependent hydrolysis of the 2-acyl groups in 3-sn-phosphoglycerides. This chain is Phospholipase A2 A2-actitoxin-Ucs2a, found in Urticina crassicornis (Mottled anemone).